Reading from the N-terminus, the 210-residue chain is Methylthioribulose-1-phosphate dehydratase (210 aa).

Zn(2+) is bound by residues H97 and H99.

It belongs to the aldolase class II family. MtnB subfamily. In terms of assembly, homotetramer. The cofactor is Zn(2+).

The enzyme catalyses 5-(methylsulfanyl)-D-ribulose 1-phosphate = 5-methylsulfanyl-2,3-dioxopentyl phosphate + H2O. It participates in amino-acid biosynthesis; L-methionine biosynthesis via salvage pathway; L-methionine from S-methyl-5-thio-alpha-D-ribose 1-phosphate: step 2/6. Its function is as follows. Catalyzes the dehydration of methylthioribulose-1-phosphate (MTRu-1-P) into 2,3-diketo-5-methylthiopentyl-1-phosphate (DK-MTP-1-P). This chain is Methylthioribulose-1-phosphate dehydratase, found in Geobacillus kaustophilus (strain HTA426).